The primary structure comprises 1063 residues: TBC1 domain family member 31 (1063 aa).

WD repeat units lie at residues 33 to 74, 75 to 116, 117 to 157, 158 to 200, 201 to 248, 249 to 296, and 297 to 334; these read HNTS…LCGN, RFNL…TVTK, ELVS…LDTF, QRKR…CDTL, VCKY…AKQL, FRII…IQTC, and KLLFEIGSLDDGISSSVISPHGRYIASIMENGSLNIYS. One can recognise a Rab-GAP TBC domain in the interval 424–599; it reads EFPTKYRMFI…KLFDNVFSNH (176 aa). The stretch at 699–951 forms a coiled coil; it reads ELDYLRERQA…EAKKWEEAEE (253 aa). Residues 1050-1053 are mediates direct interaction with PJA2; that stretch reads QAQN.

In terms of assembly, interacts with PJA2; the interaction is direct and recruits PJA2 to centrosomes. Interacts with OFD1; regulates its activity in cilium assembly. Interacts with PRKACA.

Its subcellular location is the cytoplasm. The protein resides in the cytoskeleton. It localises to the microtubule organizing center. The protein localises to the centrosome. It is found in the centriolar satellite. Its subcellular location is the cilium basal body. Molecular adapter which is involved in cilium biogenesis. Part of a functional complex including OFD1 a centriolar protein involved in cilium assembly. Could regulate the cAMP-dependent phosphorylation of OFD1, and its subsequent ubiquitination by PJA2 which ultimately leads to its proteasomal degradation. The chain is TBC1 domain family member 31 from Bos taurus (Bovine).